A 458-amino-acid chain; its full sequence is BTB/POZ domain-containing protein At5g41330 (458 aa).

Residues 11–72 (NVVSINVGGR…LRTGNLPARS (62 aa)) form the BTB domain. WD repeat units follow at residues 259–305 (DSAI…MVWE), 360–399 (LNERRGVGSKIESYGNHVFCSSKGSGIELWSEVITGLVGN), and 421–458 (SGENKITGLAFGGNRMFVTRKDQQSVQVWQSPSRGISI).

It participates in protein modification; protein ubiquitination. In terms of biological role, may act as a substrate-specific adapter of an E3 ubiquitin-protein ligase complex (CUL3-RBX1-BTB) which mediates the ubiquitination and subsequent proteasomal degradation of target proteins. In Arabidopsis thaliana (Mouse-ear cress), this protein is BTB/POZ domain-containing protein At5g41330.